The following is a 211-amino-acid chain: Superoxide dismutase [Mn] (211 aa).

Residues histidine 27, histidine 82, aspartate 165, and histidine 169 each contribute to the Mn(2+) site.

The protein belongs to the iron/manganese superoxide dismutase family. In terms of assembly, homodimer. Mn(2+) is required as a cofactor.

The catalysed reaction is 2 superoxide + 2 H(+) = H2O2 + O2. Functionally, destroys superoxide anion radicals which are normally produced within the cells and which are toxic to biological systems. The protein is Superoxide dismutase [Mn] (sodA) of Bordetella pertussis (strain Tohama I / ATCC BAA-589 / NCTC 13251).